Consider the following 228-residue polypeptide: Glucose-induced degradation protein 8-A homolog (228 aa).

The 33-residue stretch at 25–57 (QRADMNRLIMNYLVTEGFKEAAEKFRMESGIEP) folds into the LisH domain. The CTLH domain occupies 63 to 120 (SLDERIKIREMVLKGQIQEAIALINSLHPELLDTNRYLYFHLQQQHLIELIRLRETEA).

The protein belongs to the GID8 family. In terms of assembly, identified in the CTLH complex that contains at least MAEA, RMND5A (or alternatively its paralog RMND5B), GID8, WDR26, and RANBP9 and/or RANBP10. Interacts with CTNNB1.

Its function is as follows. Core component of the CTLH E3 ubiquitin-protein ligase complex that selectively accepts ubiquitin from UBE2H and mediates ubiquitination and subsequent proteasomal degradation of target proteins. Acts as a positive regulator of Wnt signaling pathway by promoting beta-catenin (CTNNB1) nuclear accumulation. Required for normal Wnt signaling and normal dorsoventral patterning during embryogenesis. This Danio rerio (Zebrafish) protein is Glucose-induced degradation protein 8-A homolog (gid8a).